Consider the following 248-residue polypeptide: 14-3-3 protein homolog 2 (248 aa).

Belongs to the 14-3-3 family.

The polypeptide is 14-3-3 protein homolog 2 (Echinococcus granulosus (Hydatid tapeworm)).